The sequence spans 536 residues: MSAKQLMFNENARHALLEGVNKVANTVKITLGPKGRNVVLDKAGGPVVTNDGVTIAKEIELKDKFENVGAKLIKEVASKTQDTTGDGTTTATVLAQAMITEGIKNITAGANPIEIKKGILKAVDAAVASIKAKSIEVKDKETINRIAIISANNDEEIGNLISEAMDRVGYNGVITVENSKTLETTLEHVEGMQFDRGYISPYMVTDQERRVVEFEEPYILITDRKISSLKTLIPVLEMIAQSGKPLLIIADDVDGEAQTALILNIIRGAIKVCAVKAPEFGDVRKEVLQDIAILTGGTVISEERNLAIEDVTLDMLGQARTVKVDQDKTTIVGGKGKKSDIDTRKKLIESQLNITEKKYDKTTLQNRLAKLSGGVAVIKAGAATETEVKEKKMRIDDALNATKAAVEEGYVAGGGVTLFRAIKALESMKADPEQMIGVNIVKRALEEPLRQIADNAGREGAEVIAMIKSNASETYGYNAKTDTYEDLLQAGVLDPTKVVRSGLQNAASIAGMLLSTEAVVVDFDEEKDKTSAAIII.

Residues 30–33 (TLGP), 86–90 (DGTTT), Gly414, and Asp494 each bind ATP.

It belongs to the chaperonin (HSP60) family. Forms a cylinder of 14 subunits composed of two heptameric rings stacked back-to-back. Interacts with the co-chaperonin GroES.

It localises to the cytoplasm. It carries out the reaction ATP + H2O + a folded polypeptide = ADP + phosphate + an unfolded polypeptide.. In terms of biological role, together with its co-chaperonin GroES, plays an essential role in assisting protein folding. The GroEL-GroES system forms a nano-cage that allows encapsulation of the non-native substrate proteins and provides a physical environment optimized to promote and accelerate protein folding. This is Chaperonin GroEL from Methanospirillum hungatei JF-1 (strain ATCC 27890 / DSM 864 / NBRC 100397 / JF-1).